A 203-amino-acid chain; its full sequence is Small ribosomal subunit protein uS4 (203 aa).

The region spanning 93-156 is the S4 RNA-binding domain; sequence RRLDNVVYRL…MKVPAILEAV (64 aa).

This sequence belongs to the universal ribosomal protein uS4 family. As to quaternary structure, part of the 30S ribosomal subunit. Contacts protein S5. The interaction surface between S4 and S5 is involved in control of translational fidelity.

Its function is as follows. One of the primary rRNA binding proteins, it binds directly to 16S rRNA where it nucleates assembly of the body of the 30S subunit. In terms of biological role, with S5 and S12 plays an important role in translational accuracy. The chain is Small ribosomal subunit protein uS4 from Streptococcus uberis (strain ATCC BAA-854 / 0140J).